The sequence spans 289 residues: MSIEFKNVDYVYAPGTPFQTQGLIDISFKIEKGSFVAIAGHTGSGKSTLMQHFDGLLLPSKGEITVAGEQINANTSSKALKAIRKKVGLVFQFPENQLFEETVLKDVMFGPLNFGFSEQKAKEQAVEWIKKVGLSEDMMDKSPFELSGGQMRRVAIAGVMAYEPEILCLDEPAAGLDPEGQKQMFEIFKEYQRAGHTVILISHNMDDISEYADDMLVLDHGHLIKHASPQEIFSDQEWVKKHYLDEPATSRLTRELQKGGFQFSEMPLTIESLVSKVANELKKKGDMDE.

An ABC transporter domain is found at 3-245 (IEFKNVDYVY…QEWVKKHYLD (243 aa)). 40–47 (GHTGSGKS) provides a ligand contact to ATP.

The protein belongs to the ABC transporter superfamily. Energy-coupling factor EcfA family. In terms of assembly, forms a stable energy-coupling factor (ECF) transporter complex composed of 2 membrane-embedded substrate-binding proteins (S component), 2 ATP-binding proteins (A component) and 2 transmembrane proteins (T component).

Its subcellular location is the cell membrane. Functionally, ATP-binding (A) component of a common energy-coupling factor (ECF) ABC-transporter complex. Unlike classic ABC transporters this ECF transporter provides the energy necessary to transport a number of different substrates. This Lactobacillus johnsonii (strain CNCM I-12250 / La1 / NCC 533) protein is Energy-coupling factor transporter ATP-binding protein EcfA2.